We begin with the raw amino-acid sequence, 565 residues long: NAD-dependent malic enzyme (565 aa).

Tyr104 (proton donor) is an active-site residue. Arg157 contributes to the NAD(+) binding site. Catalysis depends on Lys175, which acts as the Proton acceptor. A divalent metal cation-binding residues include Glu246, Asp247, and Asp270. Residues Asp270 and Asn418 each coordinate NAD(+).

It belongs to the malic enzymes family. In terms of assembly, homotetramer. The cofactor is Mg(2+). Requires Mn(2+) as cofactor.

It catalyses the reaction (S)-malate + NAD(+) = pyruvate + CO2 + NADH. The catalysed reaction is oxaloacetate + H(+) = pyruvate + CO2. The chain is NAD-dependent malic enzyme from Salmonella arizonae (strain ATCC BAA-731 / CDC346-86 / RSK2980).